The chain runs to 72 residues: Translation initiation factor IF-1 (72 aa).

Residues 1–72 enclose the S1-like domain; sequence MAKEDSIEME…SKGRIVYRAR (72 aa).

Belongs to the IF-1 family. As to quaternary structure, component of the 30S ribosomal translation pre-initiation complex which assembles on the 30S ribosome in the order IF-2 and IF-3, IF-1 and N-formylmethionyl-tRNA(fMet); mRNA recruitment can occur at any time during PIC assembly.

The protein resides in the cytoplasm. Functionally, one of the essential components for the initiation of protein synthesis. Stabilizes the binding of IF-2 and IF-3 on the 30S subunit to which N-formylmethionyl-tRNA(fMet) subsequently binds. Helps modulate mRNA selection, yielding the 30S pre-initiation complex (PIC). Upon addition of the 50S ribosomal subunit IF-1, IF-2 and IF-3 are released leaving the mature 70S translation initiation complex. In Nitrosococcus oceani (strain ATCC 19707 / BCRC 17464 / JCM 30415 / NCIMB 11848 / C-107), this protein is Translation initiation factor IF-1.